The following is a 566-amino-acid chain: MSPPGSAAGESAAGGGGGGGGPGVSEELTAAAAAAAADEGPAREEQRPIQPSFTKSLCRESHWKCLLLSLLMYGCLGAVAWCHVTTVTRLTFSSAYQGNSLMYHDSPCSNGYVYIPLAFLLMLYAVYLVECWHCQARHELQHRVDVSSVRERVGRMQQATPCIWWKAISYHYVRRTRQVTRYRNGDAYTTTQVYHERVNTHVAEAEFDYARCGVRDVSKTLVGLEGAPATRLRFTKCFSFASVEAENAYLCQRARFFAENEGLDDYMEAREGMHLKNVDFREFMVAFPDPARPPWYACSSAFWAAALLTLSWPLRVLAEYRTAYAHYHVEKLFGLEGPGSASSAGGGLSPSDELLPPLTHRLPRVNTVDSTELEWHIRSNQQLVPSYSEAVLMDLAGLGTRCGGAGGGYAPSCRYGGVGGPGAAGVAPYRRSCEHCQRAVSSSSIFSRSALSICASPRAGPGPGGGAGCGGSRFSLGRLYGSRRSCLWRSRSGSVNEASCPTEQTRLSSQASMGDDEDDDEEEAGPPPPYHDALYFPVLIVHRQEGCLGHSHRPLHRHGSCVETSL.

Residues 1–11 (MSPPGSAAGES) show a composition bias toward low complexity. The interval 1 to 25 (MSPPGSAAGESAAGGGGGGGGPGVS) is disordered. Residues 12 to 23 (AAGGGGGGGGPG) show a composition bias toward gly residues. 2 helical membrane-spanning segments follow: residues 65 to 85 (CLLLSLLMYGCLGAVAWCHVT) and 112 to 132 (YVYIPLAFLLMLYAVYLVECW). The segment covering 495–512 (VNEASCPTEQTRLSSQAS) has biased composition (polar residues). Residues 495-529 (VNEASCPTEQTRLSSQASMGDDEDDDEEEAGPPPP) form a disordered region. The segment covering 514–524 (GDDEDDDEEEA) has biased composition (acidic residues).

This sequence belongs to the TMEM151 family.

The protein localises to the membrane. The protein is Transmembrane protein 151B (TMEM151B) of Homo sapiens (Human).